We begin with the raw amino-acid sequence, 257 residues long: Deoxyribose-phosphate aldolase (257 aa).

Residue Asp102 is the Proton donor/acceptor of the active site. Lys166 acts as the Schiff-base intermediate with acetaldehyde in catalysis. Lys198 (proton donor/acceptor) is an active-site residue.

This sequence belongs to the DeoC/FbaB aldolase family. DeoC type 2 subfamily.

It is found in the cytoplasm. The enzyme catalyses 2-deoxy-D-ribose 5-phosphate = D-glyceraldehyde 3-phosphate + acetaldehyde. It functions in the pathway carbohydrate degradation; 2-deoxy-D-ribose 1-phosphate degradation; D-glyceraldehyde 3-phosphate and acetaldehyde from 2-deoxy-alpha-D-ribose 1-phosphate: step 2/2. Its function is as follows. Catalyzes a reversible aldol reaction between acetaldehyde and D-glyceraldehyde 3-phosphate to generate 2-deoxy-D-ribose 5-phosphate. In Shewanella frigidimarina (strain NCIMB 400), this protein is Deoxyribose-phosphate aldolase.